A 974-amino-acid chain; its full sequence is Bifunctional glutamine synthetase adenylyltransferase/adenylyl-removing enzyme (974 aa).

Residues 1–464 (MKNAFLKTQL…HYAALFENEQ (464 aa)) form an adenylyl removase region. An adenylyl transferase region spans residues 468-974 (LEIGNLVFTG…YSIFKQVMKY (507 aa)).

This sequence belongs to the GlnE family. Requires Mg(2+) as cofactor.

The catalysed reaction is [glutamine synthetase]-O(4)-(5'-adenylyl)-L-tyrosine + phosphate = [glutamine synthetase]-L-tyrosine + ADP. It catalyses the reaction [glutamine synthetase]-L-tyrosine + ATP = [glutamine synthetase]-O(4)-(5'-adenylyl)-L-tyrosine + diphosphate. Its function is as follows. Involved in the regulation of glutamine synthetase GlnA, a key enzyme in the process to assimilate ammonia. When cellular nitrogen levels are high, the C-terminal adenylyl transferase (AT) inactivates GlnA by covalent transfer of an adenylyl group from ATP to specific tyrosine residue of GlnA, thus reducing its activity. Conversely, when nitrogen levels are low, the N-terminal adenylyl removase (AR) activates GlnA by removing the adenylyl group by phosphorolysis, increasing its activity. The regulatory region of GlnE binds the signal transduction protein PII (GlnB) which indicates the nitrogen status of the cell. The protein is Bifunctional glutamine synthetase adenylyltransferase/adenylyl-removing enzyme of Bartonella henselae (strain ATCC 49882 / DSM 28221 / CCUG 30454 / Houston 1) (Rochalimaea henselae).